The primary structure comprises 278 residues: Tryptophan synthase alpha chain (278 aa).

Active-site proton acceptor residues include Glu-50 and Asp-61.

This sequence belongs to the TrpA family. In terms of assembly, tetramer of two alpha and two beta chains.

It catalyses the reaction (1S,2R)-1-C-(indol-3-yl)glycerol 3-phosphate + L-serine = D-glyceraldehyde 3-phosphate + L-tryptophan + H2O. Its pathway is amino-acid biosynthesis; L-tryptophan biosynthesis; L-tryptophan from chorismate: step 5/5. Its function is as follows. The alpha subunit is responsible for the aldol cleavage of indoleglycerol phosphate to indole and glyceraldehyde 3-phosphate. The sequence is that of Tryptophan synthase alpha chain from Rhodopseudomonas palustris (strain TIE-1).